A 317-amino-acid chain; its full sequence is Transmembrane and death domain protein 1 (317 aa).

Positions 1 to 27 are cleaved as a signal peptide; sequence MAARTLASALVLTLWVWALAPAGAVDA. Residues 28–218 are Extracellular-facing; that stretch reads MGPHAAVRLA…ERSPMGWAGP (191 aa). The segment covering 62-73 has biased composition (basic and acidic residues); that stretch reads ELSRLSEDRLAR. The tract at residues 62–106 is disordered; the sequence is ELSRLSEDRLARPEPLNTTSGSPSRRRRREAAEDPAGRVAGPGEV. A Death domain is found at 66–150; the sequence is LSEDRLARPE…DVARELGKNL (85 aa). Asn78 carries N-linked (GlcNAc...) asparagine glycosylation. The chain crosses the membrane as a helical span at residues 219-239; the sequence is LALGLLTGFVGALGTGALVVL. Residues 240–317 are Cytoplasmic-facing; the sequence is LTLWITGGDG…SWGSGALDGL (78 aa).

The protein localises to the membrane. The chain is Transmembrane and death domain protein 1 from Homo sapiens (Human).